Reading from the N-terminus, the 377-residue chain is 4-hydroxy-3-methylbut-2-en-1-yl diphosphate synthase (flavodoxin) (377 aa).

Residues Cys275, Cys278, Cys310, and Glu317 each contribute to the [4Fe-4S] cluster site.

Belongs to the IspG family. [4Fe-4S] cluster serves as cofactor.

The catalysed reaction is (2E)-4-hydroxy-3-methylbut-2-enyl diphosphate + oxidized [flavodoxin] + H2O + 2 H(+) = 2-C-methyl-D-erythritol 2,4-cyclic diphosphate + reduced [flavodoxin]. It functions in the pathway isoprenoid biosynthesis; isopentenyl diphosphate biosynthesis via DXP pathway; isopentenyl diphosphate from 1-deoxy-D-xylulose 5-phosphate: step 5/6. Its function is as follows. Converts 2C-methyl-D-erythritol 2,4-cyclodiphosphate (ME-2,4cPP) into 1-hydroxy-2-methyl-2-(E)-butenyl 4-diphosphate. The chain is 4-hydroxy-3-methylbut-2-en-1-yl diphosphate synthase (flavodoxin) from Jannaschia sp. (strain CCS1).